The chain runs to 208 residues: Transmembrane protein 160 (208 aa).

The transit peptide at 1-45 (MASIRWLMGSRLSRFVCPFAQLVRQPVLRYVRPPVRALHRGSVRR) directs the protein to the mitochondrion. 3 consecutive transmembrane segments (helical) span residues 82–102 (GFLSWFRNGLLATGIGVIAFV), 110–130 (AGYAFFILGGMCVSFGGASYV), and 147–167 (VLLHTAVVSSAALFWLCAVSL). A compositionally biased stretch (acidic residues) spans 181–192 (DDEEHGADESSE). Residues 181–208 (DDEEHGADESSECAECRARRDREKGQDK) form a disordered region. Residues 194–208 (AECRARRDREKGQDK) show a composition bias toward basic and acidic residues.

Belongs to the TMEM160 family.

It localises to the mitochondrion inner membrane. In Danio rerio (Zebrafish), this protein is Transmembrane protein 160.